The chain runs to 276 residues: UPF0328 protein ECU08_2080 (276 aa).

The segment at 1–24 (MGIIDVQRSHLTATPSKERDAPAH) is disordered.

The protein belongs to the UPF0328 family.

The protein is UPF0328 protein ECU08_2080 of Encephalitozoon cuniculi (strain GB-M1) (Microsporidian parasite).